A 299-amino-acid polypeptide reads, in one-letter code: Oxygen-dependent coproporphyrinogen-III oxidase (299 aa).

Substrate is bound at residue Ser-92. 2 residues coordinate Mn(2+): His-96 and His-106. The Proton donor role is filled by His-106. Residue 108–110 (NVR) coordinates substrate. His-145 and His-175 together coordinate Mn(2+). Residues 240–275 (YVEFNLVWDRGTLFGLQTGGRTESILMSMPPLVRWE) are important for dimerization. Residue 258–260 (GGR) coordinates substrate.

The protein belongs to the aerobic coproporphyrinogen-III oxidase family. In terms of assembly, homodimer. It depends on Mn(2+) as a cofactor.

The protein localises to the cytoplasm. The enzyme catalyses coproporphyrinogen III + O2 + 2 H(+) = protoporphyrinogen IX + 2 CO2 + 2 H2O. It functions in the pathway porphyrin-containing compound metabolism; protoporphyrin-IX biosynthesis; protoporphyrinogen-IX from coproporphyrinogen-III (O2 route): step 1/1. Involved in the heme biosynthesis. Catalyzes the aerobic oxidative decarboxylation of propionate groups of rings A and B of coproporphyrinogen-III to yield the vinyl groups in protoporphyrinogen-IX. The sequence is that of Oxygen-dependent coproporphyrinogen-III oxidase from Escherichia coli (strain SMS-3-5 / SECEC).